A 309-amino-acid polypeptide reads, in one-letter code: SERTA domain-containing protein 2 (309 aa).

3 disordered regions span residues 1–30 (MLGK…GPSR), 79–114 (EGSL…CDLG), and 175–220 (PTST…MDSL). The span at 8–18 (RKFDEHEDGLE) shows a compositional bias: basic and acidic residues. One can recognise an SERTA domain in the interval 33–80 (YTLQRQTIFNISLMKLYNHRPLTEPSLQKTVLINNMLRRIQEELKQEG). 2 stretches are compositionally biased toward low complexity: residues 89–99 (SSQPSNSLSDS) and 175–189 (PTST…AAPE). Residues 204 to 216 (EGPEEGRTDDSRF) show a composition bias toward basic and acidic residues. A required for transactivation activity region spans residues 230–306 (TGFLTDLTLD…TELDHIMEVL (77 aa)). The short motif at 233–238 (LTDLTL) is the Nuclear export signal (NES) element.

In terms of assembly, interacts with XPO1; which mediates nuclear export. Interacts with TFDP1; modulates transactivation activity of TFDP1/E2F complexes. Polyubiquitinated, which promotes proteasomal degradation. Expressed in white and brown adipose tissue.

Its subcellular location is the nucleus. It localises to the cytoplasm. Its function is as follows. Acts at E2F-responsive promoters as coregulator to integrate signals provided by PHD- and/or bromodomain-containing transcription factors. May act as coactivator as well as corepressor of E2F1-TFDP1 and E2F4-TFDP1 complexes on E2F consensus binding sites, which would activate or inhibit E2F-target genes expression. Modulates fat storage by down-regulating the expression of key genes involved in adipocyte lipolysis, thermogenesis and oxidative metabolism. The sequence is that of SERTA domain-containing protein 2 (Sertad2) from Mus musculus (Mouse).